Here is a 188-residue protein sequence, read N- to C-terminus: Elongation factor P (188 aa).

This sequence belongs to the elongation factor P family.

It is found in the cytoplasm. It functions in the pathway protein biosynthesis; polypeptide chain elongation. Involved in peptide bond synthesis. Stimulates efficient translation and peptide-bond synthesis on native or reconstituted 70S ribosomes in vitro. Probably functions indirectly by altering the affinity of the ribosome for aminoacyl-tRNA, thus increasing their reactivity as acceptors for peptidyl transferase. The chain is Elongation factor P from Chlorobium limicola (strain DSM 245 / NBRC 103803 / 6330).